The chain runs to 1108 residues: Ubiquitin carboxyl-terminal hydrolase 5 (1108 aa).

An MATH domain is found at 55–187 (FQRFTWHIKS…DGALLLTAYV (133 aa)). Active-site nucleophile residues include C120 and C222. Residues 213–528 (VGLKNQGATC…SAYMLLYLRK (316 aa)) form the USP domain. H464 serves as the catalytic Proton acceptor.

The protein belongs to the peptidase C19 family.

It is found in the nucleus. It catalyses the reaction Thiol-dependent hydrolysis of ester, thioester, amide, peptide and isopeptide bonds formed by the C-terminal Gly of ubiquitin (a 76-residue protein attached to proteins as an intracellular targeting signal).. Its function is as follows. Hydrolase that deubiquitinates target proteins. Cleaves the UBL propeptide in sde2. The sequence is that of Ubiquitin carboxyl-terminal hydrolase 5 (ubp5) from Schizosaccharomyces pombe (strain 972 / ATCC 24843) (Fission yeast).